We begin with the raw amino-acid sequence, 106 residues long: Pyrimidine/purine nucleoside phosphorylase (106 aa).

The protein belongs to the nucleoside phosphorylase PpnP family.

It catalyses the reaction a purine D-ribonucleoside + phosphate = a purine nucleobase + alpha-D-ribose 1-phosphate. The enzyme catalyses adenosine + phosphate = alpha-D-ribose 1-phosphate + adenine. The catalysed reaction is cytidine + phosphate = cytosine + alpha-D-ribose 1-phosphate. It carries out the reaction guanosine + phosphate = alpha-D-ribose 1-phosphate + guanine. It catalyses the reaction inosine + phosphate = alpha-D-ribose 1-phosphate + hypoxanthine. The enzyme catalyses thymidine + phosphate = 2-deoxy-alpha-D-ribose 1-phosphate + thymine. The catalysed reaction is uridine + phosphate = alpha-D-ribose 1-phosphate + uracil. It carries out the reaction xanthosine + phosphate = alpha-D-ribose 1-phosphate + xanthine. In terms of biological role, catalyzes the phosphorolysis of diverse nucleosides, yielding D-ribose 1-phosphate and the respective free bases. Can use uridine, adenosine, guanosine, cytidine, thymidine, inosine and xanthosine as substrates. Also catalyzes the reverse reactions. The polypeptide is Pyrimidine/purine nucleoside phosphorylase (Burkholderia ambifaria (strain MC40-6)).